The primary structure comprises 323 residues: Acetyl-coenzyme A carboxylase carboxyl transferase subunit alpha (323 aa).

Residues 36–293 (ELELLSAKAQ…KEEVVKNLQI (258 aa)) form the CoA carboxyltransferase C-terminal domain.

It belongs to the AccA family. In terms of assembly, acetyl-CoA carboxylase is a heterohexamer composed of biotin carboxyl carrier protein (AccB), biotin carboxylase (AccC) and two subunits each of ACCase subunit alpha (AccA) and ACCase subunit beta (AccD).

The protein resides in the cytoplasm. The enzyme catalyses N(6)-carboxybiotinyl-L-lysyl-[protein] + acetyl-CoA = N(6)-biotinyl-L-lysyl-[protein] + malonyl-CoA. Its pathway is lipid metabolism; malonyl-CoA biosynthesis; malonyl-CoA from acetyl-CoA: step 1/1. In terms of biological role, component of the acetyl coenzyme A carboxylase (ACC) complex. First, biotin carboxylase catalyzes the carboxylation of biotin on its carrier protein (BCCP) and then the CO(2) group is transferred by the carboxyltransferase to acetyl-CoA to form malonyl-CoA. The chain is Acetyl-coenzyme A carboxylase carboxyl transferase subunit alpha from Carboxydothermus hydrogenoformans (strain ATCC BAA-161 / DSM 6008 / Z-2901).